Here is a 210-residue protein sequence, read N- to C-terminus: Peptidyl-tRNA hydrolase (210 aa).

Position 14 (Y14) interacts with tRNA. H19 (proton acceptor) is an active-site residue. 3 residues coordinate tRNA: F64, N66, and N112.

Belongs to the PTH family. In terms of assembly, monomer.

It localises to the cytoplasm. The enzyme catalyses an N-acyl-L-alpha-aminoacyl-tRNA + H2O = an N-acyl-L-amino acid + a tRNA + H(+). Hydrolyzes ribosome-free peptidyl-tRNAs (with 1 or more amino acids incorporated), which drop off the ribosome during protein synthesis, or as a result of ribosome stalling. Its function is as follows. Catalyzes the release of premature peptidyl moieties from peptidyl-tRNA molecules trapped in stalled 50S ribosomal subunits, and thus maintains levels of free tRNAs and 50S ribosomes. In Methylorubrum extorquens (strain CM4 / NCIMB 13688) (Methylobacterium extorquens), this protein is Peptidyl-tRNA hydrolase.